The chain runs to 1358 residues: Phosphoinositide 3-kinase regulatory subunit 4 (1358 aa).

A lipid anchor (N-myristoyl glycine) is attached at Gly2. Residues 26 to 324 (FEYDKSLGST…AFPEIFYTFL (299 aa)) enclose the Protein kinase domain. Residues 32-40 (LGSTRFFKV) and Lys53 contribute to the ATP site. The Proton acceptor role is filled by Asp148. HEAT repeat units follow at residues 413 to 450 (ILLDRITPYLLHFSNDSVPRVRAEALRTLTKVLALVQE), 458 to 495 (IYPEYILPGIAHLAQDDATIVRLAYAENIALLAETALR), 572 to 610 (KANDVLLSHMITFLNDKNDWHLRGAFFDSIVGVAAYVGW), and 612 to 648 (SSSILKPLLQQGLSDAEEFVIVKALNALTCMCQLGLL). Residues Ser808, Ser813, Ser853, and Ser865 each carry the phosphoserine modification. 6 WD repeats span residues 991 to 1030 (EHKSAVNRIRVSDEHLLFATCSNDGTVKIWNSQKMEGKTT), 1040 to 1079 (RIGGRVKTLTFCQGSHYLAIASDNGAVQLLGIEASKLPKS), 1093 to 1134 (KEDG…NAWT), 1139 to 1178 (LKSGLITSFAVDIHQCWLCIGTSSGAMACWDMRFQLPISS), 1182 to 1223 (PSRA…RRLT), and 1237 to 1278 (PSPH…RSYV). The tract at residues 1307–1326 (KQKVGPSDDTPRRGPESLPV) is disordered. Positions 1315–1326 (DTPRRGPESLPV) are enriched in basic and acidic residues. Thr1316 is modified (phosphothreonine). Residues 1327–1358 (GHHDIITDIATFQTTQGFIVTASRDGIVKVWK) form a WD 7 repeat.

Belongs to the protein kinase superfamily. Ser/Thr protein kinase family. Component of the PI3K (PI3KC3/PI3K-III/class III phosphatidylinositol 3-kinase) complex the core of which is composed of the catalytic subunit PIK3C3, the regulatory subunit PIK3R4 and BECN1 associating with additional regulatory/auxiliary subunits to form alternative complex forms. Alternative complex forms containing a fourth regulatory subunit in a mutually exclusive manner are PI3K complex I (PI3KC3-C1) containing ATG14, and PI3K complex II (PI3KC3-C2) containing UVRAG. PI3KC3-C1 displays a V-shaped architecture with PIK3R4 serving as a bridge between PIK3C3 and the ATG14:BECN1 subcomplex. Both, PI3KC3-C1 and PI3KC3-C2, can associate with further regulatory subunits, such as RUBCN, SH3GLB1/Bif-1, AMBRA1 and NRBF2. PI3KC3-C1 probably associates with PIK3CB. Interacts with RAB7A in the presence of PIK3C3/VPS34. Interacts with NRBF2. Interacts with ARMC3. Mn(2+) serves as cofactor. Myristoylated. Post-translationally, probably autophosphorylated.

It is found in the late endosome. It localises to the cytoplasmic vesicle. The protein resides in the autophagosome. The protein localises to the membrane. It carries out the reaction L-seryl-[protein] + ATP = O-phospho-L-seryl-[protein] + ADP + H(+). It catalyses the reaction L-threonyl-[protein] + ATP = O-phospho-L-threonyl-[protein] + ADP + H(+). Its function is as follows. Regulatory subunit of the PI3K complex that mediates formation of phosphatidylinositol 3-phosphate; different complex forms are believed to play a role in multiple membrane trafficking pathways: PI3KC3-C1 is involved in initiation of autophagosomes and PI3KC3-C2 in maturation of autophagosomes and endocytosis. Involved in regulation of degradative endocytic trafficking and cytokinesis, probably in the context of PI3KC3-C2. In Mus musculus (Mouse), this protein is Phosphoinositide 3-kinase regulatory subunit 4 (Pik3r4).